The chain runs to 651 residues: ATP-dependent RNA helicase MRH4, mitochondrial (651 aa).

Residues 1–61 constitute a mitochondrion transit peptide; it reads MLRSSLGSVC…SNARQATRRE (61 aa). Positions 45 to 56 are enriched in polar residues; that stretch reads SSLSFSTSNARQ. A disordered region spans residues 45–137; sequence SSLSFSTSNA…GGKKLGRDGK (93 aa). Composition is skewed to basic and acidic residues over residues 72–83 and 124–137; these read RVGRSTARDGDK and NGREGGKKLGRDGK. The Q motif motif lies at 167–200; sequence DSFDQFDLLPQVKDAVLNEALKGMLDIKPTPVQR. Residues 210 to 241 form a disordered region; it reads TTGARSRWRTKSKPADSGSEAASPDAPPPPRE. Over residues 224–233 the composition is skewed to low complexity; that stretch reads ADSGSEAASP. The 212-residue stretch at 234–445 folds into the Helicase ATP-binding domain; that stretch reads DAPPPPREEF…ASRFPNMRRI (212 aa). Position 247–254 (247–254) interacts with ATP; it reads AETGSGKT. The DEAD box motif lies at 392–395; it reads DEAD. Positions 494 to 651 constitute a Helicase C-terminal domain; the sequence is PVKGQVDVRR…ESMFMGQALV (158 aa).

The protein belongs to the DEAD box helicase family. MRH4 subfamily.

It localises to the mitochondrion. It catalyses the reaction ATP + H2O = ADP + phosphate + H(+). Functionally, ATP-binding RNA helicase involved in mitochondrial RNA metabolism. Required for maintenance of mitochondrial DNA. This Pyricularia oryzae (strain 70-15 / ATCC MYA-4617 / FGSC 8958) (Rice blast fungus) protein is ATP-dependent RNA helicase MRH4, mitochondrial (MRH4).